A 334-amino-acid chain; its full sequence is RNA ligase 2 (334 aa).

Residues 1–234 are adenylyltransferase; that stretch reads MFKKYSSLEN…KCKNSKFSEK (234 aa). AMP-binding residues include Glu34, Lys35, Ile36, Asn40, Arg55, and Glu99. Residue Lys35 is the N6-AMP-lysine intermediate of the active site. 5 residues coordinate Mg(2+): Ile162, Leu164, Asn166, Glu204, and Tyr206. AMP is bound by residues Lys225 and Lys227.

It belongs to the RNA ligase 2 family. It depends on Mg(2+) as a cofactor. Requires Mn(2+) as cofactor.

It carries out the reaction ATP + (ribonucleotide)n-3'-hydroxyl + 5'-phospho-(ribonucleotide)m = (ribonucleotide)n+m + AMP + diphosphate.. Its function is as follows. Repairs 3'-OH/5'-PO4 nicks in duplex RNA or RNA:DNA hybrid in which the broken 3'-OH strand is RNA. The nick ligation reaction entails three nucleotidyl transfer steps. In the first step, the RNA ligase reacts with ATP in the absence of nucleic acid to form a covalent ligase-AMP intermediate and release pyrophosphate. In step 2, the ligase-AMP binds to the nicked duplex nucleic acid and transfers the adenylate to the 5'-PO4 terminus to form an adenylylated nicked intermediate. In step 3, the RNA ligase directs the attack of the nick 3'-OH on the 5'-phosphoanhydride linkage, resulting in a repaired 3' - 5' phosphodiester and release of AMP. This Enterobacteria phage T4 (Bacteriophage T4) protein is RNA ligase 2 (Y10A).